The following is a 488-amino-acid chain: Facilitated trehalose transporter Tret1-2 homolog (488 aa).

The Cytoplasmic segment spans residues 1–28; that stretch reads MKILMRADTHVSYSVPAEGTKANFTFSQ. Residues 29–49 traverse the membrane as a helical segment; it reads VLAALSVSLCSLVVGFVSAYT. The Extracellular portion of the chain corresponds to 50–72; that stretch reads SPALVSMTDRTITSFEVTKDAGS. Residues 73–93 traverse the membrane as a helical segment; that stretch reads WVGGIMPLAALAGGITGGPLI. The Cytoplasmic portion of the chain corresponds to 94-105; the sequence is EYLGRRNTILAT. The helical transmembrane segment at 106 to 126 threads the bilayer; that stretch reads AVPFIVSSLLIACAVNVIMIL. The Extracellular portion of the chain corresponds to 127 to 129; sequence CGR. A helical membrane pass occupies residues 130–150; that stretch reads FLTGFCVGIASLSLPVYLGET. At 151–160 the chain is on the cytoplasmic side; it reads LQPEVRGTLG. Residues 161–181 form a helical membrane-spanning segment; that stretch reads LLPTALGNIGILVCYVAGSFM. N182 is a glycosylation site (N-linked (GlcNAc...) asparagine). Residues 182–184 are Extracellular-facing; that stretch reads NWS. The chain crosses the membrane as a helical span at residues 185–205; the sequence is ILAFLGAALPVPFLILMIIIP. At 206–268 the chain is on the cytoplasmic side; that stretch reads ETPRWFVNRG…ELFKRINLKP (63 aa). The helical transmembrane segment at 269–289 threads the bilayer; that stretch reads LSISLGLMFFQQFSGINAVIF. At 290-305 the chain is on the extracellular side; the sequence is YTVQIFKDAGSTIDSN. Residues 306–326 form a helical membrane-spanning segment; that stretch reads LCTIIVGIVNFFATFMGIILI. The Cytoplasmic segment spans residues 327-332; sequence DRLGRK. Residues 333 to 353 traverse the membrane as a helical segment; the sequence is ILLYVSDIAMILTLSILGGFF. Over 354-372 the chain is Extracellular; it reads YCKAHGPDVSHLGWLPLSC. The chain crosses the membrane as a helical span at residues 373 to 393; the sequence is FVIYILGFSLGFGPIPWLMMG. The Cytoplasmic portion of the chain corresponds to 394-402; sequence EILPAKIRG. Residues 403 to 423 traverse the membrane as a helical segment; the sequence is PAASVVTAFNWFCTFVVTKTF. Residues 424-433 are Extracellular-facing; that stretch reads QDLTVAMGPH. Residues 434–454 traverse the membrane as a helical segment; it reads GAFWLFGVVCIVGLFFVIIYV. At 455–488 the chain is on the cytoplasmic side; sequence PETRGKSLEEIERKMMGRVPISAVVNIKPFSFNM.

Belongs to the major facilitator superfamily. Sugar transporter (TC 2.A.1.1) family. Trehalose transporter subfamily.

Its subcellular location is the cell membrane. Its function is as follows. Fails to transport trehalose. The polypeptide is Facilitated trehalose transporter Tret1-2 homolog (Drosophila sechellia (Fruit fly)).